A 699-amino-acid polypeptide reads, in one-letter code: Chitin synthase 7 (699 aa).

The next 6 membrane-spanning stretches (helical) occupy residues 19–39 (IVGVVMLAAVLEWFLWIAAFL), 58–80 (SVVVALLFTALRSIFLPIMVVTL), 98–118 (LQWFGFWCFAGLLTVPWLFCI), 445–465 (FMQNTIRTTALLFFIMVLAII), 474–494 (LPVGFIAVSLGLNWLLMIYFG), and 507–527 (VMFVVNPFFNWFYMVYGIFTA). The disordered stretch occupies residues 628–648 (AAGGSGEASEPGTRWAPDPRE).

The protein belongs to the chitin synthase family. Class VI subfamily.

Its subcellular location is the cell membrane. The enzyme catalyses [(1-&gt;4)-N-acetyl-beta-D-glucosaminyl](n) + UDP-N-acetyl-alpha-D-glucosamine = [(1-&gt;4)-N-acetyl-beta-D-glucosaminyl](n+1) + UDP + H(+). Its function is as follows. Polymerizes chitin, a structural polymer of the cell wall and septum, by transferring the sugar moiety of UDP-GlcNAc to the non-reducing end of the growing chitin polymer. Plays a role in cell wall integrity. Required to successfully penetrate the host plants and thus plays a key role in pathogenicity. The polypeptide is Chitin synthase 7 (Verticillium dahliae (strain VdLs.17 / ATCC MYA-4575 / FGSC 10137) (Verticillium wilt)).